A 388-amino-acid chain; its full sequence is Succinate--CoA ligase [ADP-forming] subunit beta (388 aa).

One can recognise an ATP-grasp domain in the interval 9-244 (KEIFRSMGVA…LEEEDPKEIE (236 aa)). Residues Lys-46, 53 to 55 (GRG), Glu-99, Cys-102, and Glu-107 each bind ATP. The Mg(2+) site is built by Asn-199 and Asp-213. Residues Asn-264 and 321–323 (GIM) contribute to the substrate site.

The protein belongs to the succinate/malate CoA ligase beta subunit family. As to quaternary structure, heterotetramer of two alpha and two beta subunits. Mg(2+) serves as cofactor.

The catalysed reaction is succinate + ATP + CoA = succinyl-CoA + ADP + phosphate. It catalyses the reaction GTP + succinate + CoA = succinyl-CoA + GDP + phosphate. It participates in carbohydrate metabolism; tricarboxylic acid cycle; succinate from succinyl-CoA (ligase route): step 1/1. In terms of biological role, succinyl-CoA synthetase functions in the citric acid cycle (TCA), coupling the hydrolysis of succinyl-CoA to the synthesis of either ATP or GTP and thus represents the only step of substrate-level phosphorylation in the TCA. The beta subunit provides nucleotide specificity of the enzyme and binds the substrate succinate, while the binding sites for coenzyme A and phosphate are found in the alpha subunit. This chain is Succinate--CoA ligase [ADP-forming] subunit beta, found in Staphylococcus aureus (strain bovine RF122 / ET3-1).